We begin with the raw amino-acid sequence, 705 residues long: Polyribonucleotide nucleotidyltransferase (705 aa).

Mg(2+) is bound by residues Asp487 and Asp493. A KH domain is found at 554–613 (PKILTMKINPDKIRDVIGPSGKQINKIIEDTGVKIDIEQDGTIFISSTEEDMNQKAKKII). One can recognise an S1 motif domain in the interval 623–691 (GQLYLGKVKR…KQGRVNLSRK (69 aa)).

It belongs to the polyribonucleotide nucleotidyltransferase family. It depends on Mg(2+) as a cofactor.

It localises to the cytoplasm. It carries out the reaction RNA(n+1) + phosphate = RNA(n) + a ribonucleoside 5'-diphosphate. In terms of biological role, involved in mRNA degradation. Catalyzes the phosphorolysis of single-stranded polyribonucleotides processively in the 3'- to 5'-direction. The sequence is that of Polyribonucleotide nucleotidyltransferase from Bacillus pumilus (strain SAFR-032).